A 387-amino-acid polypeptide reads, in one-letter code: Probable purine permease 6 (387 aa).

The disordered stretch occupies residues M1–S24. Positions Q9–S24 are enriched in basic and acidic residues. A run of 10 helical transmembrane segments spans residues L36–G56, W68–L88, F106–L126, F129–F149, I162–I182, Y201–L221, I238–F258, I283–I303, F309–F329, and M333–Y353. Residues P362–A387 are disordered. Basic and acidic residues predominate over residues Q370–D381.

This sequence belongs to the purine permeases (TC 2.A.7.14) family.

It localises to the membrane. The protein is Probable purine permease 6 (PUP6) of Arabidopsis thaliana (Mouse-ear cress).